The chain runs to 442 residues: Casein kinase 1-like protein 10 (442 aa).

A Protein kinase domain is found at 9–278 (FKLGRKIGSG…LKRLFRDLFI (270 aa)). Residues 15–23 (IGSGSFGEL) and Lys38 contribute to the ATP site. Residue Asp128 is the Proton acceptor of the active site. Disordered regions lie at residues 299 to 323 (GSISKPRPNPKPALDPPGPSAERNE) and 381 to 421 (AVMS…LSAR). Pro residues predominate over residues 305–317 (RPNPKPALDPPGP). Positions 384–394 (SSSQPGSSGEL) are enriched in low complexity. The span at 400–417 (SKLFSSSAQKIQPVQETK) shows a compositional bias: polar residues.

The protein belongs to the protein kinase superfamily. CK1 Ser/Thr protein kinase family. Casein kinase I subfamily. Monomer. Post-translationally, autophosphorylated.

Its subcellular location is the cytoplasm. It localises to the cell junction. It is found in the plasmodesma. It carries out the reaction L-seryl-[protein] + ATP = O-phospho-L-seryl-[protein] + ADP + H(+). The catalysed reaction is L-threonyl-[protein] + ATP = O-phospho-L-threonyl-[protein] + ADP + H(+). Casein kinases are operationally defined by their preferential utilization of acidic proteins such as caseins as substrates. It can phosphorylate a large number of proteins. This chain is Casein kinase 1-like protein 10, found in Arabidopsis thaliana (Mouse-ear cress).